Here is a 407-residue protein sequence, read N- to C-terminus: Putative cystathionine beta-lyase (407 aa).

N6-(pyridoxal phosphate)lysine is present on lysine 237.

Belongs to the class-II pyridoxal-phosphate-dependent aminotransferase family. MalY/PatB cystathionine beta-lyase subfamily. It depends on pyridoxal 5'-phosphate as a cofactor.

It catalyses the reaction L,L-cystathionine + H2O = L-homocysteine + pyruvate + NH4(+). The enzyme catalyses an S-substituted L-cysteine + H2O = a thiol + pyruvate + NH4(+). Its pathway is amino-acid biosynthesis; L-methionine biosynthesis via de novo pathway; L-homocysteine from L-cystathionine: step 1/1. This chain is Putative cystathionine beta-lyase, found in Mycobacterium tuberculosis (strain CDC 1551 / Oshkosh).